Here is a 513-residue protein sequence, read N- to C-terminus: ATP synthase subunit alpha (513 aa).

Position 170–177 (170–177 (GDRQTGKT)) interacts with ATP.

This sequence belongs to the ATPase alpha/beta chains family. In terms of assembly, F-type ATPases have 2 components, CF(1) - the catalytic core - and CF(0) - the membrane proton channel. CF(1) has five subunits: alpha(3), beta(3), gamma(1), delta(1), epsilon(1). CF(0) has four main subunits: a(1), b(1), b'(1) and c(9-12).

It localises to the cell inner membrane. It catalyses the reaction ATP + H2O + 4 H(+)(in) = ADP + phosphate + 5 H(+)(out). Its function is as follows. Produces ATP from ADP in the presence of a proton gradient across the membrane. The alpha chain is a regulatory subunit. This Gloeobacter violaceus (strain ATCC 29082 / PCC 7421) protein is ATP synthase subunit alpha.